A 517-amino-acid polypeptide reads, in one-letter code: AAA ATPase forming ring-shaped complexes (517 aa).

The stretch at 25-53 (ARNAKLVELLQASRTKLEEINGRLEALAE) forms a coiled coil. 233 to 238 (GNGKTL) contacts ATP.

The protein belongs to the AAA ATPase family. Homohexamer. Assembles into a hexameric ring structure.

This chain is AAA ATPase forming ring-shaped complexes, found in Corynebacterium jeikeium (strain K411).